The sequence spans 378 residues: Glutamate 5-kinase 1 (378 aa).

Lys-13 serves as a coordination point for ATP. Substrate is bound by residues Ser-53, Asp-140, and Asn-152. ATP is bound at residue 172 to 173; the sequence is SD. In terms of domain architecture, PUA spans 278–355; that stretch reads AGRLTVDAGA…AEIETVLGYE (78 aa).

Belongs to the glutamate 5-kinase family.

It localises to the cytoplasm. The catalysed reaction is L-glutamate + ATP = L-glutamyl 5-phosphate + ADP. It participates in amino-acid biosynthesis; L-proline biosynthesis; L-glutamate 5-semialdehyde from L-glutamate: step 1/2. Its function is as follows. Catalyzes the transfer of a phosphate group to glutamate to form L-glutamate 5-phosphate. This is Glutamate 5-kinase 1 from Mesorhizobium japonicum (strain LMG 29417 / CECT 9101 / MAFF 303099) (Mesorhizobium loti (strain MAFF 303099)).